We begin with the raw amino-acid sequence, 120 residues long: Chaperonin GroEL (120 aa).

23–27 (DGTTT) lines the ATP pocket.

It belongs to the chaperonin (HSP60) family. Forms a cylinder of 14 subunits composed of two heptameric rings stacked back-to-back. Interacts with the co-chaperonin GroES.

The protein resides in the cytoplasm. It carries out the reaction ATP + H2O + a folded polypeptide = ADP + phosphate + an unfolded polypeptide.. In terms of biological role, together with its co-chaperonin GroES, plays an essential role in assisting protein folding. The GroEL-GroES system forms a nano-cage that allows encapsulation of the non-native substrate proteins and provides a physical environment optimized to promote and accelerate protein folding. The chain is Chaperonin GroEL from Mycolicibacterium chitae (Mycobacterium chitae).